A 68-amino-acid chain; its full sequence is Probable Sec-independent protein translocase protein TatE (68 aa).

The chain crosses the membrane as a helical span at residues 1–21; sequence MGEISITKLLVVAALIILVFG. The tract at residues 43–68 is disordered; the sequence is MNEDDDSAKKTTAEEEAPAQKLSHKE.

Belongs to the TatA/E family. TatE subfamily.

It is found in the cell inner membrane. Part of the twin-arginine translocation (Tat) system that transports large folded proteins containing a characteristic twin-arginine motif in their signal peptide across membranes. TatE shares overlapping functions with TatA. In Klebsiella pneumoniae subsp. pneumoniae (strain ATCC 700721 / MGH 78578), this protein is Probable Sec-independent protein translocase protein TatE.